The chain runs to 267 residues: Rhomboid-type serine protease 2 (267 aa).

A run of 6 helical transmembrane segments spans residues 20-40, 67-87, 99-119, 126-146, 155-179, and 185-206; these read LPLF…ASLQ, FPLI…LTPL, TSLA…YVLI, ANHG…MESI, FVIG…AALI, and LGHL…KLLA. S134 acts as the Nucleophile in catalysis. Residue H187 is part of the active site. The tract at residues 247 to 267 is disordered; the sequence is RPGPSGSAATELVGTTQRLGP.

This sequence belongs to the peptidase S54 family.

The protein resides in the golgi apparatus membrane. It localises to the golgi apparatus. It is found in the cis-Golgi network membrane. The catalysed reaction is Cleaves type-1 transmembrane domains using a catalytic dyad composed of serine and histidine that are contributed by different transmembrane domains.. Functionally, probable rhomboid-type serine protease that catalyzes intramembrane proteolysis. The polypeptide is Rhomboid-type serine protease 2 (RBD2) (Gibberella zeae (strain ATCC MYA-4620 / CBS 123657 / FGSC 9075 / NRRL 31084 / PH-1) (Wheat head blight fungus)).